The sequence spans 1062 residues: Protein P1-P2 (1062 aa).

The N-terminal stretch at methionine 1–alanine 20 is a signal peptide. Transmembrane regions (helical) follow at residues alanine 121–alanine 141, isoleucine 144–isoleucine 164, and alanine 172–tryptophan 192. The region spanning valine 207–glutamate 399 is the Peptidase S39 domain. Active-site for protease activity residues include histidine 255, aspartate 286, and serine 354. The tract at residues threonine 456–lysine 557 is disordered. Over residues threonine 463–threonine 484 the composition is skewed to polar residues. The span at glutamine 497 to arginine 511 shows a compositional bias: basic residues. The span at glutamine 541–lysine 553 shows a compositional bias: polar residues. The RdRp catalytic domain maps to glutamate 859–lysine 974.

Post-translationally, specific enzymatic cleavages in vivo yield mature proteins. The protease probably cleaves itself and releases the RdRp (Potential). Cleavages have been shown in the P1 protein, but since the N-terminus containing the serine protease is shared between P1 and P1-P2, cleavages should also occur within the P1-P2 protein.

The protein resides in the membrane. The catalysed reaction is RNA(n) + a ribonucleoside 5'-triphosphate = RNA(n+1) + diphosphate. Functionally, precursor from which the RNA-dependent RNA polymerase (RdRp) is probably released. RNA-dependent RNA polymerase plays an essential role in virus replication (Potential). The polypeptide is Protein P1-P2 (Solanum tuberosum (Potato)).